The chain runs to 1226 residues: MDNRRSLAQPSFSNKVIDTNELKNLIVWAFRNYGIARAANMADKLKDLGFHYATQAGISLSLEDLRIPPSKQSLLLGTIEDIKATENKYRRGEITAVERFQKVIDTWNNASESLKQEVIKYFKETDPLNAVSMMAFSGARGNISQVRQLVGMRGLMADPQGQIIDLPISSNFREGLTVTDYFISSYGARKGLVDTALRTADSGYLTRRLVDVSQDVIIREVDCKTNKGIILEDLVDTQKILINLEQALSGRVLAENVFHPETNCLIAHTNQDVSPKLAKEITKAGIKKVLVRSPVTCNSRSSVCQYCYGWNLAHGRLVDLGEAVGIIAAQSIGEPGTQLTMRTFHTGGVFTGELAEQIYAPIDGQLIDLDIESYTDVRTRHGEQALITKKPTQVTIRSKKNQKSIINLSKGTTLLICDGELVSKDQVIAESPRRNRLMTERAQKHVVSDLSGKICFSNLTVEETDNNQYTTRITKTGGLIWVLSGEVYSISDSANVIVHKEDKTKAGTILAQTELINHYAGEVRIHQNTNSSITNIQVITESIVIPGCYIYTDVIHKKESYILETEKKQKFLFKAIPNQKIQDGYTVAELISDTYKTTSGGIIKYLDLNVSKKKTGLDKDAYEILSPGYILWISEETHEINKDSSLILVHNGDVIESGTELVKNIFSKSSGIAEIIEKDGIVREIIIKPGSIYKLSEVYSNNDKSRGFLRPGERLHNNISTDKLVYWEYIENEQMPYILIRPVIVYSIPETKSSLIENLVSQKPSQTKLKLVKRTPFRDGERVKSIEGVHLVTTNLVAEIEHRDDNLISSIEFSAKESGNNYFDLRLSTFETLSIKSIDVNKSEKQQSQTRIIVKNGEYIKPFTVVASTEIIAMSEGTVEEIYSEKNTSRRILIATSSDKKTFNIGKSTVKVSVGDWIRCGDFITENMTSLDSGQIIEISSRSVTLRIARPYLVSNGAILHVDNNALIRRGETLAILVFDRAKTGDIIQGLPRIEEILEARKKTDVLLNPHDILDASFDLYIECGLALYEAARLSFQEIQLLLVKEVQLVYQSQGVNISDKHVEVIVRQMTSKVKIENGEETGYLPGELVELQKIEQTNKAITLRNKINASYRPVLLGITQASLNTESFISAASFQETTKVLTEAAISGKLDWLRGLKENVIIGRLIPAGTGFNMYDNCNGSSLEKKNLTANTNDESTISSVRDDLDDIILDDRTARNYFSNKSVE.

4 residues coordinate Zn(2+): C223, C297, C304, and C307.

The protein belongs to the RNA polymerase beta' chain family. RpoC2 subfamily. In terms of assembly, in plastids the minimal PEP RNA polymerase catalytic core is composed of four subunits: alpha, beta, beta', and beta''. When a (nuclear-encoded) sigma factor is associated with the core the holoenzyme is formed, which can initiate transcription. Requires Zn(2+) as cofactor.

The protein resides in the plastid. It is found in the chloroplast. The catalysed reaction is RNA(n) + a ribonucleoside 5'-triphosphate = RNA(n+1) + diphosphate. Its function is as follows. DNA-dependent RNA polymerase catalyzes the transcription of DNA into RNA using the four ribonucleoside triphosphates as substrates. The protein is DNA-directed RNA polymerase subunit beta'' of Pyropia yezoensis (Susabi-nori).